A 327-amino-acid polypeptide reads, in one-letter code: Biotin synthase (327 aa).

Positions 52 to 279 (TKVQLSTLVS…ASYVRLSAGR (228 aa)) constitute a Radical SAM core domain. C67, C71, and C74 together coordinate [4Fe-4S] cluster. The [2Fe-2S] cluster site is built by C111, C142, C202, and R274.

It belongs to the radical SAM superfamily. Biotin synthase family. Homodimer. [4Fe-4S] cluster is required as a cofactor. The cofactor is [2Fe-2S] cluster.

It carries out the reaction (4R,5S)-dethiobiotin + (sulfur carrier)-SH + 2 reduced [2Fe-2S]-[ferredoxin] + 2 S-adenosyl-L-methionine = (sulfur carrier)-H + biotin + 2 5'-deoxyadenosine + 2 L-methionine + 2 oxidized [2Fe-2S]-[ferredoxin]. The protein operates within cofactor biosynthesis; biotin biosynthesis; biotin from 7,8-diaminononanoate: step 2/2. Functionally, catalyzes the conversion of dethiobiotin (DTB) to biotin by the insertion of a sulfur atom into dethiobiotin via a radical-based mechanism. The sequence is that of Biotin synthase from Chromobacterium violaceum (strain ATCC 12472 / DSM 30191 / JCM 1249 / CCUG 213 / NBRC 12614 / NCIMB 9131 / NCTC 9757 / MK).